The following is a 1302-amino-acid chain: Multidrug resistance protein homolog 65 (1302 aa).

A disordered region spans residues Met1–Glu23. Topologically, residues Met1–Leu48 are cytoplasmic. The ABC transmembrane type-1 1 domain maps to Leu48–Thr369. The chain crosses the membrane as a helical span at residues Phe49–Tyr69. The Extracellular portion of the chain corresponds to Ser70–Ile118. Asn103 is a glycosylation site (N-linked (GlcNAc...) asparagine). The chain crosses the membrane as a helical span at residues Ser119 to Leu147. Topologically, residues Arg148–Glu194 are cytoplasmic. The helical transmembrane segment at Lys195 to Ser215 threads the bilayer. Topologically, residues Tyr216–Ala223 are extracellular. A helical membrane pass occupies residues Val224–Gln242. At Gly243 to Gly302 the chain is on the cytoplasmic side. Residues Leu303–Gly323 traverse the membrane as a helical segment. Residues Val324 to Ala341 lie on the Extracellular side of the membrane. Residues Ile342 to Pro362 form a helical membrane-spanning segment. The Cytoplasmic portion of the chain corresponds to Phe363–Tyr731. The ABC transporter 1 domain occupies Val405 to Ala641. Gly440–Ser447 contacts ATP. Residues Leu732 to Phe753 form a helical membrane-spanning segment. The ABC transmembrane type-1 2 domain maps to Leu732–Ala1020. The Extracellular segment spans residues Gly754–Ser776. Residues Trp777–Asn798 traverse the membrane as a helical segment. The Cytoplasmic portion of the chain corresponds to Tyr799 to Pro852. Residues Leu853–Tyr873 form a helical membrane-spanning segment. Asn874 is a topological domain (extracellular). The helical transmembrane segment at Trp875–Leu894 threads the bilayer. At Glu895–Arg956 the chain is on the cytoplasmic side. A helical transmembrane segment spans residues Trp957–Leu977. Over Cys978–Asp993 the chain is Extracellular. Residues Ile994–Phe1014 traverse the membrane as a helical segment. The Cytoplasmic portion of the chain corresponds to Thr1015–His1302. One can recognise an ABC transporter 2 domain in the interval Val1059–Thr1298. Gly1094–Ser1101 is a binding site for ATP.

It belongs to the ABC transporter superfamily. ABCB family. Multidrug resistance exporter (TC 3.A.1.201) subfamily.

The protein resides in the membrane. The enzyme catalyses ATP + H2O + xenobioticSide 1 = ADP + phosphate + xenobioticSide 2.. The sequence is that of Multidrug resistance protein homolog 65 (Mdr65) from Drosophila melanogaster (Fruit fly).